Here is a 183-residue protein sequence, read N- to C-terminus: Hypoxanthine-guanine-xanthine phosphoribosyltransferase (183 aa).

GMP is bound by residues 102–110 (EDIIDTGLT), Lys134, and Asp163. Catalysis depends on Asp106, which acts as the Proton acceptor. Position 163 (Asp163) interacts with Mg(2+).

Homodimer. The cofactor is Mg(2+).

It localises to the cytoplasm. The catalysed reaction is IMP + diphosphate = hypoxanthine + 5-phospho-alpha-D-ribose 1-diphosphate. It catalyses the reaction GMP + diphosphate = guanine + 5-phospho-alpha-D-ribose 1-diphosphate. It carries out the reaction XMP + diphosphate = xanthine + 5-phospho-alpha-D-ribose 1-diphosphate. Its pathway is purine metabolism; GMP biosynthesis via salvage pathway; GMP from guanine: step 1/1. The protein operates within purine metabolism; IMP biosynthesis via salvage pathway; IMP from hypoxanthine: step 1/1. It functions in the pathway purine metabolism; XMP biosynthesis via salvage pathway; XMP from xanthine: step 1/1. Its function is as follows. Essential in nucleic acid metabolism of T.foetus because the parasite is unable to synthesize purine nucleotides de novo and relies on the HGXPRTase activities for its purine requirements by salvaging purine bases from the host. Works with guanine, hypoxanthine and xanthine. The protein is Hypoxanthine-guanine-xanthine phosphoribosyltransferase (HPT) of Tritrichomonas foetus (Trichomonas foetus).